The primary structure comprises 517 residues: Crotonobetaine/carnitine--CoA ligase (517 aa).

Belongs to the ATP-dependent AMP-binding enzyme family.

The enzyme catalyses 4-(trimethylamino)butanoate + ATP + CoA = 4-(trimethylamino)butanoyl-CoA + AMP + diphosphate. It catalyses the reaction crotonobetaine + ATP + CoA = crotonobetainyl-CoA + AMP + diphosphate. It carries out the reaction (R)-carnitine + ATP + CoA = (R)-carnitinyl-CoA + AMP + diphosphate. It functions in the pathway amine and polyamine metabolism; carnitine metabolism. Catalyzes the transfer of CoA to carnitine, generating the initial carnitinyl-CoA needed for the CaiB reaction cycle. Also has activity toward crotonobetaine and gamma-butyrobetaine. The protein is Crotonobetaine/carnitine--CoA ligase of Escherichia coli (strain SE11).